Here is a 118-residue protein sequence, read N- to C-terminus: Putative pterin-4-alpha-carbinolamine dehydratase (118 aa).

Belongs to the pterin-4-alpha-carbinolamine dehydratase family.

The enzyme catalyses (4aS,6R)-4a-hydroxy-L-erythro-5,6,7,8-tetrahydrobiopterin = (6R)-L-erythro-6,7-dihydrobiopterin + H2O. In Pseudomonas putida (strain GB-1), this protein is Putative pterin-4-alpha-carbinolamine dehydratase.